Here is a 238-residue protein sequence, read N- to C-terminus: Cysteine-rich venom protein pseudechetoxin (238 aa).

The first 19 residues, Met1–Gly19, serve as a signal peptide directing secretion. Residues Thr20–Ser27 constitute a propeptide that is removed on maturation. The 127-residue stretch at Val38 to Tyr164 folds into the SCP domain. Thr51 and Ser106 together coordinate Zn(2+). Cystine bridges form between Cys75–Cys153, Cys92–Cys165, Cys148–Cys162, Cys184–Cys191, Cys187–Cys196, Cys200–Cys233, Cys209–Cys227, and Cys218–Cys231. The region spanning Cys200–Cys233 is the ShKT domain.

In terms of tissue distribution, expressed by the venom gland.

The protein localises to the secreted. Blocks olfactory (CNGA2) and retinal (CNGA1) cyclic nucleotide-gated (CNG) ion channel currents. Does not inhibit retinal (CNGA3) currents. It forms high-affinity contacts with the pore turret region and most likely inhibits CNG channel current by blocking the external entrance to the transmembrane pore. Is really more potent that Pseudecin. Does not affect neither depolarization- nor caffeine-induced contraction arterial smooth muscle. This is Cysteine-rich venom protein pseudechetoxin from Pseudechis australis (Mulga snake).